The following is a 245-amino-acid chain: Transcriptional regulatory protein YpdB (245 aa).

In terms of domain architecture, Response regulatory spans Lys-2 to Glu-116. Asp-53 carries the 4-aspartylphosphate modification. One can recognise an HTH LytTR-type domain in the interval Ile-140–Leu-245.

Post-translationally, phosphorylated by YpdA.

Its subcellular location is the cytoplasm. Its function is as follows. Member of the two-component regulatory system YpdA/YpdB. YpdB regulates expression of yhjX by binding to its promoter region. In Escherichia coli O6:H1 (strain CFT073 / ATCC 700928 / UPEC), this protein is Transcriptional regulatory protein YpdB (ypdB).